Here is an 806-residue protein sequence, read N- to C-terminus: Leucine--tRNA ligase (806 aa).

The 'HIGH' region motif lies at 54-64 (SYPSGDLHMGH). The 'KMSKS' region signature appears at 571–575 (KMSKS). Residue Lys-574 participates in ATP binding.

This sequence belongs to the class-I aminoacyl-tRNA synthetase family.

Its subcellular location is the cytoplasm. It catalyses the reaction tRNA(Leu) + L-leucine + ATP = L-leucyl-tRNA(Leu) + AMP + diphosphate. In Tropheryma whipplei (strain TW08/27) (Whipple's bacillus), this protein is Leucine--tRNA ligase.